The sequence spans 271 residues: Tryptophan synthase alpha chain (271 aa).

Active-site proton acceptor residues include Glu49 and Asp60.

It belongs to the TrpA family. Tetramer of two alpha and two beta chains.

It carries out the reaction (1S,2R)-1-C-(indol-3-yl)glycerol 3-phosphate + L-serine = D-glyceraldehyde 3-phosphate + L-tryptophan + H2O. It participates in amino-acid biosynthesis; L-tryptophan biosynthesis; L-tryptophan from chorismate: step 5/5. In terms of biological role, the alpha subunit is responsible for the aldol cleavage of indoleglycerol phosphate to indole and glyceraldehyde 3-phosphate. The chain is Tryptophan synthase alpha chain from Yersinia pestis bv. Antiqua (strain Angola).